A 309-amino-acid chain; its full sequence is ATP synthase gamma chain (309 aa).

This sequence belongs to the ATPase gamma chain family. In terms of assembly, F-type ATPases have 2 components, CF(1) - the catalytic core - and CF(0) - the membrane proton channel. CF(1) has five subunits: alpha(3), beta(3), gamma(1), delta(1), epsilon(1). CF(0) has three main subunits: a, b and c.

Its subcellular location is the cell membrane. Its function is as follows. Produces ATP from ADP in the presence of a proton gradient across the membrane. The gamma chain is believed to be important in regulating ATPase activity and the flow of protons through the CF(0) complex. This Salinispora tropica (strain ATCC BAA-916 / DSM 44818 / JCM 13857 / NBRC 105044 / CNB-440) protein is ATP synthase gamma chain.